A 276-amino-acid polypeptide reads, in one-letter code: Protein MGF 360-15R (276 aa).

The protein belongs to the asfivirus MGF 360 family.

Its function is as follows. Plays a role in virus cell tropism, and may be required for efficient virus replication in macrophages. The protein is Protein MGF 360-15R of African swine fever virus (isolate Tick/South Africa/Pretoriuskop Pr4/1996) (ASFV).